Here is a 723-residue protein sequence, read N- to C-terminus: Fatty acid oxidation complex subunit alpha (723 aa).

An enoyl-CoA hydratase/isomerase region spans residues M1–D189. D296 provides a ligand contact to substrate. Residues S311–I723 form a 3-hydroxyacyl-CoA dehydrogenase region. Residues M325, D344, V401–E403, K408, and S430 each bind NAD(+). The active-site For 3-hydroxyacyl-CoA dehydrogenase activity is H451. An NAD(+)-binding site is contributed by N454. The substrate site is built by N501 and Y661.

In the N-terminal section; belongs to the enoyl-CoA hydratase/isomerase family. It in the C-terminal section; belongs to the 3-hydroxyacyl-CoA dehydrogenase family. Heterotetramer of two alpha chains (FadB) and two beta chains (FadA).

The catalysed reaction is a (3S)-3-hydroxyacyl-CoA + NAD(+) = a 3-oxoacyl-CoA + NADH + H(+). It carries out the reaction a (3S)-3-hydroxyacyl-CoA = a (2E)-enoyl-CoA + H2O. The enzyme catalyses a 4-saturated-(3S)-3-hydroxyacyl-CoA = a (3E)-enoyl-CoA + H2O. It catalyses the reaction (3S)-3-hydroxybutanoyl-CoA = (3R)-3-hydroxybutanoyl-CoA. The catalysed reaction is a (3Z)-enoyl-CoA = a 4-saturated (2E)-enoyl-CoA. It carries out the reaction a (3E)-enoyl-CoA = a 4-saturated (2E)-enoyl-CoA. It functions in the pathway lipid metabolism; fatty acid beta-oxidation. Its function is as follows. Involved in the aerobic and anaerobic degradation of long-chain fatty acids via beta-oxidation cycle. Catalyzes the formation of 3-oxoacyl-CoA from enoyl-CoA via L-3-hydroxyacyl-CoA. It can also use D-3-hydroxyacyl-CoA and cis-3-enoyl-CoA as substrate. The chain is Fatty acid oxidation complex subunit alpha from Vibrio campbellii (strain ATCC BAA-1116).